Reading from the N-terminus, the 495-residue chain is Glycerol kinase (495 aa).

Threonine 11 is a binding site for ADP. 3 residues coordinate ATP: threonine 11, threonine 12, and serine 13. Threonine 11 contributes to the sn-glycerol 3-phosphate binding site. Residue arginine 15 coordinates ADP. Residues arginine 81, glutamate 82, tyrosine 133, and aspartate 242 each coordinate sn-glycerol 3-phosphate. Arginine 81, glutamate 82, tyrosine 133, aspartate 242, and glutamine 243 together coordinate glycerol. Positions 264 and 307 each coordinate ADP. Residues threonine 264, glycine 307, glutamine 311, and glycine 408 each contribute to the ATP site. Glycine 408 and asparagine 412 together coordinate ADP.

Belongs to the FGGY kinase family.

The catalysed reaction is glycerol + ATP = sn-glycerol 3-phosphate + ADP + H(+). Its pathway is polyol metabolism; glycerol degradation via glycerol kinase pathway; sn-glycerol 3-phosphate from glycerol: step 1/1. With respect to regulation, inhibited by fructose 1,6-bisphosphate (FBP). Its function is as follows. Key enzyme in the regulation of glycerol uptake and metabolism. Catalyzes the phosphorylation of glycerol to yield sn-glycerol 3-phosphate. The protein is Glycerol kinase of Rhodospirillum rubrum (strain ATCC 11170 / ATH 1.1.1 / DSM 467 / LMG 4362 / NCIMB 8255 / S1).